A 498-amino-acid polypeptide reads, in one-letter code: MRINPTTSDPGVSTLEKKNLGRIAQIIGPVLDVAFPPGKMPNIYNALIVKGRDTAGQPMNVTCEVQQLLGNNRVRAVAMSATDGLTRGMEVIDTGAPLSVPVGGATLGRIFNVLGEPVDNLGPVDTRTTSPIHRSAPAFTQLDTKLSIFETGIKVVDLLAPYRRGGKIGLFGGAGVGKTVLIMELINNIAKAHGGVSVFGGVGERTREGNDLYMEMKESGVINEQNIAESKVALVYGQMNEPPGARMRVGLTALTMAEYFRDVNEQDVLLFIDNIFRFVQAGSEVSALLGRMPSAVGYQPTLSTEMGSLQERITSTKEGSITSIQAVYVPADDLTDPAPATTFAHLDATTVLSRGLAAKGIYPAVDPLDSTSTMLQPRIVGEEHYEIAQRVKETLQRYKELQDIIAILGLDELSEEDRLTVARARKIERFLSQPFFVAEVFTGSPGKYVGLAETIRGFQLILSGELDSLPEQAFYLVGNIDEATAKAMNLEMESKLKK.

Residue 172 to 179 (GGAGVGKT) coordinates ATP.

It belongs to the ATPase alpha/beta chains family. In terms of assembly, F-type ATPases have 2 components, CF(1) - the catalytic core - and CF(0) - the membrane proton channel. CF(1) has five subunits: alpha(3), beta(3), gamma(1), delta(1), epsilon(1). CF(0) has four main subunits: a(1), b(1), b'(1) and c(9-12).

The protein localises to the plastid. Its subcellular location is the chloroplast thylakoid membrane. The catalysed reaction is ATP + H2O + 4 H(+)(in) = ADP + phosphate + 5 H(+)(out). Produces ATP from ADP in the presence of a proton gradient across the membrane. The catalytic sites are hosted primarily by the beta subunits. This chain is ATP synthase subunit beta, chloroplastic, found in Spinacia oleracea (Spinach).